Here is a 293-residue protein sequence, read N- to C-terminus: GTPase Era (293 aa).

Residues 2-168 (KILFSTIIGR…INEIKKYSYE (167 aa)) form the Era-type G domain. The G1 stretch occupies residues 10-17 (GRPNVGKS). 10-17 (GRPNVGKS) contributes to the GTP binding site. A G2 region spans residues 36–40 (QATRD). A G3 region spans residues 57 to 60 (DTPG). GTP contacts are provided by residues 57 to 61 (DTPGI) and 118 to 121 (TKID). Positions 118 to 121 (TKID) are G4. The tract at residues 147 to 149 (ISS) is G5. The region spanning 199–279 (LEQELPHSIL…KLFLKIKVKK (81 aa)) is the KH type-2 domain.

This sequence belongs to the TRAFAC class TrmE-Era-EngA-EngB-Septin-like GTPase superfamily. Era GTPase family. As to quaternary structure, monomer.

The protein localises to the cytoplasm. It is found in the cell membrane. Functionally, an essential GTPase that binds both GDP and GTP, with rapid nucleotide exchange. Plays a role in 16S rRNA processing and 30S ribosomal subunit biogenesis and possibly also in cell cycle regulation and energy metabolism. This is GTPase Era from Mycoplasmopsis pulmonis (strain UAB CTIP) (Mycoplasma pulmonis).